We begin with the raw amino-acid sequence, 566 residues long: Oxygen-dependent choline dehydrogenase (566 aa).

An FAD-binding site is contributed by 7–36 (DYIICGAGSAGNVLATRLTEDPNVTVLLLE). Residues 185-204 (EGFGPMDRTVTPKGRRASTA) are disordered. Residue histidine 474 is the Proton acceptor of the active site.

This sequence belongs to the GMC oxidoreductase family. Requires FAD as cofactor.

The catalysed reaction is choline + A = betaine aldehyde + AH2. It carries out the reaction betaine aldehyde + NAD(+) + H2O = glycine betaine + NADH + 2 H(+). It functions in the pathway amine and polyamine biosynthesis; betaine biosynthesis via choline pathway; betaine aldehyde from choline (cytochrome c reductase route): step 1/1. Its function is as follows. Involved in the biosynthesis of the osmoprotectant glycine betaine. Catalyzes the oxidation of choline to betaine aldehyde and betaine aldehyde to glycine betaine at the same rate. This chain is Oxygen-dependent choline dehydrogenase, found in Burkholderia vietnamiensis (strain G4 / LMG 22486) (Burkholderia cepacia (strain R1808)).